A 113-amino-acid polypeptide reads, in one-letter code: Colicin-E1* immunity protein (113 aa).

Its function is as follows. This protein is able to protect a cell, which harbors the plasmid pKY-1 encoding colicin E1*, against colicin E1*. In Shigella sonnei, this protein is Colicin-E1* immunity protein (imm).